The sequence spans 299 residues: tRNA uridine(34) hydroxylase (299 aa).

The 95-residue stretch at 132 to 226 folds into the Rhodanese domain; that stretch reads ASRPVVMLDT…YFEEVGGAHY (95 aa). Cysteine 186 acts as the Cysteine persulfide intermediate in catalysis.

This sequence belongs to the TrhO family.

It carries out the reaction uridine(34) in tRNA + AH2 + O2 = 5-hydroxyuridine(34) in tRNA + A + H2O. In terms of biological role, catalyzes oxygen-dependent 5-hydroxyuridine (ho5U) modification at position 34 in tRNAs. This Burkholderia pseudomallei (strain K96243) protein is tRNA uridine(34) hydroxylase.